The chain runs to 75 residues: Tautomerase PptA (75 aa).

Proline 2 serves as the catalytic Proton acceptor; via imino nitrogen.

Belongs to the 4-oxalocrotonate tautomerase family. PptA subfamily. As to quaternary structure, homodimer.

It localises to the cytoplasm. In Escherichia coli (strain SMS-3-5 / SECEC), this protein is Tautomerase PptA.